The following is a 606-amino-acid chain: ATP-dependent rRNA helicase spb4 (606 aa).

Positions Met-1–Ala-29 match the Q motif motif. The 182-residue stretch at Ile-32 to Arg-213 folds into the Helicase ATP-binding domain. Ala-45 to Thr-52 lines the ATP pocket. The short motif at Asp-161–Asp-164 is the DEAD box element. A Helicase C-terminal domain is found at Cys-246 to Leu-400. Residues Lys-521–Asp-574 form a disordered region. Residues Lys-521–Ser-601 are a coiled coil. Residues Arg-529–Lys-539 are compositionally biased toward basic residues.

Belongs to the DEAD box helicase family. DDX55/SPB4 subfamily. In terms of assembly, component of pre-60S ribosomal complexes.

The protein resides in the nucleus. The protein localises to the nucleolus. The enzyme catalyses ATP + H2O = ADP + phosphate + H(+). Its function is as follows. ATP-binding RNA helicase involved in the biogenesis of 60S ribosomal subunits. Binds 90S pre-ribosomal particles and dissociates from pre-60S ribosomal particles after processing of 27SB pre-rRNA. Required for the normal formation of 18S rRNA through the processing of pre-rRNAs at sites A0, A1 and A2, and the normal formation of 25S and 5.8S rRNAs through the processing of pre-rRNAs at sites C1 and C2. This chain is ATP-dependent rRNA helicase spb4, found in Schizosaccharomyces pombe (strain 972 / ATCC 24843) (Fission yeast).